A 272-amino-acid polypeptide reads, in one-letter code: Shikimate dehydrogenase (NADP(+)) (272 aa).

Shikimate contacts are provided by residues 14–16 and Thr61; that span reads SKS. Lys65 (proton acceptor) is an active-site residue. Glu77 contacts NADP(+). Shikimate-binding residues include Asn86 and Asp102. NADP(+)-binding positions include 126-130, 149-154, and Met213; these read GAGGA and NRTYSR. Tyr215 provides a ligand contact to shikimate. Residue Gly237 participates in NADP(+) binding.

This sequence belongs to the shikimate dehydrogenase family. As to quaternary structure, homodimer.

It carries out the reaction shikimate + NADP(+) = 3-dehydroshikimate + NADPH + H(+). It functions in the pathway metabolic intermediate biosynthesis; chorismate biosynthesis; chorismate from D-erythrose 4-phosphate and phosphoenolpyruvate: step 4/7. In terms of biological role, involved in the biosynthesis of the chorismate, which leads to the biosynthesis of aromatic amino acids. Catalyzes the reversible NADPH linked reduction of 3-dehydroshikimate (DHSA) to yield shikimate (SA). This is Shikimate dehydrogenase (NADP(+)) from Enterobacter sp. (strain 638).